The following is a 481-amino-acid chain: Proline--tRNA ligase (481 aa).

This sequence belongs to the class-II aminoacyl-tRNA synthetase family. ProS type 3 subfamily. As to quaternary structure, homodimer.

It is found in the cytoplasm. The catalysed reaction is tRNA(Pro) + L-proline + ATP = L-prolyl-tRNA(Pro) + AMP + diphosphate. Catalyzes the attachment of proline to tRNA(Pro) in a two-step reaction: proline is first activated by ATP to form Pro-AMP and then transferred to the acceptor end of tRNA(Pro). This chain is Proline--tRNA ligase, found in Saccharolobus islandicus (strain Y.N.15.51 / Yellowstone #2) (Sulfolobus islandicus).